The chain runs to 415 residues: Maltose excess protein 1, chloroplastic (415 aa).

The disordered stretch occupies residues 74–93 (SESDSDSDFPHENQQGNPGL). 9 consecutive transmembrane segments (helical) span residues 139–159 (ALSA…LSLL), 176–196 (LGVV…AMPI), 199–219 (FVAT…YYFG), 231–251 (DVIT…TFVP), 252–272 (LVPN…AAII), 286–306 (FVGS…PVSQ), 322–342 (SITM…ALFI), 345–365 (LMWL…NILC), and 373–393 (SQSF…LALW).

In terms of tissue distribution, expressed in leaves and roots. Expressed in root cap cells.

Its subcellular location is the plastid. The protein resides in the chloroplast inner membrane. Its function is as follows. Probable maltose transporter. Essential for the conversion of starch to sucrose in leaves at night, probably via the export of maltose from the chloroplast. Required for root cap cells formation. This chain is Maltose excess protein 1, chloroplastic (MEX1), found in Arabidopsis thaliana (Mouse-ear cress).